Here is an 872-residue protein sequence, read N- to C-terminus: DNA mismatch repair protein MutS (872 aa).

632 to 639 (GPNMGGKS) contacts ATP.

This sequence belongs to the DNA mismatch repair MutS family.

This protein is involved in the repair of mismatches in DNA. It is possible that it carries out the mismatch recognition step. This protein has a weak ATPase activity. In Colwellia psychrerythraea (strain 34H / ATCC BAA-681) (Vibrio psychroerythus), this protein is DNA mismatch repair protein MutS.